A 479-amino-acid chain; its full sequence is Ribosomal lysine N-methyltransferase 2 (479 aa).

The 304-residue stretch at 22–325 (PNISICESPE…INEELFLNYG (304 aa)) folds into the SET domain. Residue Y324 participates in S-adenosyl-L-methionine binding.

The protein belongs to the class V-like SAM-binding methyltransferase superfamily. RKM2 family.

S-adenosyl-L-methionine-dependent protein-lysine N-methyltransferase that trimethylates 60S ribosomal protein L12 (RPL12A and RPL12B) at 'Lys-4' and 'Lys-11'. The sequence is that of Ribosomal lysine N-methyltransferase 2 from Saccharomyces cerevisiae (strain ATCC 204508 / S288c) (Baker's yeast).